We begin with the raw amino-acid sequence, 556 residues long: MSVSAFNRRWAAVILEALTRHGVRHVCIAPGSRSTPLTLAAAENPAFIHHTHFDERGLGHLALGLAKVSQQPVAVIVTSGTAVANLYSALIEAGLTGEKLILLTADRPPELIDCGANQAIRQAGMFASHPSQTLSLPRPTQDIPARWLVSTIDNALAMLHAGALHINCPFAEPLYGDMNDTGLVWQQRLGDWWQDEKPWLREARRLESDKQRDWFFWRQKRGVVVAGRMSAEEGKKVAQWAQTLGWPLIGDVLSQTGQPLPCADLWLGNAKAVTELQQAQIVVQLGSSLTGKRLLQWQATCEPEEYWVIDNIEGRLDPAHHRGRRLVAKIADWLELHPAEKRKPWCVEIPRLAELAWQRVVAQRDTFGEAQLAHRIRDYLPEQGQLFVGNSLVVRLIDALSQLPAGYPVYSNRGASGIDGLLSTAAGVQRASAKSTLAIVGDLSALYDLNALALLRQVSAPFVLIVVNNNGGQIFSLLPTPQSKRERFYLMPQNVHFDHAAAMFNLRYHRPENWEELESALAGAWRTPATTVIELVVNDTDGAQTLQQLLAQVSHL.

The protein belongs to the TPP enzyme family. MenD subfamily. As to quaternary structure, homodimer. Mg(2+) serves as cofactor. Mn(2+) is required as a cofactor. Requires thiamine diphosphate as cofactor.

It carries out the reaction isochorismate + 2-oxoglutarate + H(+) = 5-enolpyruvoyl-6-hydroxy-2-succinyl-cyclohex-3-ene-1-carboxylate + CO2. It participates in quinol/quinone metabolism; 1,4-dihydroxy-2-naphthoate biosynthesis; 1,4-dihydroxy-2-naphthoate from chorismate: step 2/7. The protein operates within quinol/quinone metabolism; menaquinone biosynthesis. Functionally, catalyzes the thiamine diphosphate-dependent decarboxylation of 2-oxoglutarate and the subsequent addition of the resulting succinic semialdehyde-thiamine pyrophosphate anion to isochorismate to yield 2-succinyl-5-enolpyruvyl-6-hydroxy-3-cyclohexene-1-carboxylate (SEPHCHC). This chain is 2-succinyl-5-enolpyruvyl-6-hydroxy-3-cyclohexene-1-carboxylate synthase, found in Salmonella gallinarum (strain 287/91 / NCTC 13346).